A 109-amino-acid chain; its full sequence is Flagellar hook-basal body complex protein FliE (109 aa).

The tract at residues Met-1 to Gly-38 is disordered. The span at Arg-22–Gly-38 shows a compositional bias: basic and acidic residues.

Belongs to the FliE family.

It localises to the bacterial flagellum basal body. The sequence is that of Flagellar hook-basal body complex protein FliE from Helicobacter acinonychis (strain Sheeba).